The chain runs to 345 residues: 2-oxoglutarate-dependent ethylene/succinate-forming enzyme (345 aa).

In terms of domain architecture, Fe2OG dioxygenase spans glycine 167–proline 288. Histidine 191 and histidine 270 together coordinate Fe cation.

It belongs to the iron/ascorbate-dependent oxidoreductase family. In terms of assembly, monomer. The cofactor is Fe(2+).

The catalysed reaction is 2-oxoglutarate + O2 + 2 H(+) = ethene + 3 CO2 + H2O. The enzyme catalyses L-arginine + 2-oxoglutarate + O2 = guanidine + L-glutamate 5-semialdehyde + succinate + CO2. The protein operates within alkene biosynthesis; ethylene biosynthesis via 2-oxoglutarate. Simultaneously catalyzes two reactions, namely formation of ethylene and of succinate from 2-oxoglutarate. The chain is 2-oxoglutarate-dependent ethylene/succinate-forming enzyme (efe) from Ralstonia nicotianae (strain ATCC BAA-1114 / GMI1000) (Ralstonia solanacearum).